The chain runs to 121 residues: Small ribosomal subunit protein uS13 (121 aa).

The interval 97 to 121 (VRGQRTRTNARTRRGARKTVAGRKK) is disordered. Residues 100-121 (QRTRTNARTRRGARKTVAGRKK) are compositionally biased toward basic residues.

This sequence belongs to the universal ribosomal protein uS13 family. In terms of assembly, part of the 30S ribosomal subunit. Forms a loose heterodimer with protein S19. Forms two bridges to the 50S subunit in the 70S ribosome.

Located at the top of the head of the 30S subunit, it contacts several helices of the 16S rRNA. In the 70S ribosome it contacts the 23S rRNA (bridge B1a) and protein L5 of the 50S subunit (bridge B1b), connecting the 2 subunits; these bridges are implicated in subunit movement. Contacts the tRNAs in the A and P-sites. The sequence is that of Small ribosomal subunit protein uS13 from Prochlorococcus marinus (strain NATL1A).